A 1173-amino-acid chain; its full sequence is Pleckstrin homology domain-containing family A member 6 (1173 aa).

Polar residues predominate over residues 1-22 (MSNKTGGKRSATINSDIANHNM). Positions 1 to 39 (MSNKTGGKRSATINSDIANHNMVSEVPPERPNIRATRTS) are disordered. Residues 59–158 (PVTKAGWLYK…WIQAMGEAAR (100 aa)) form the PH domain. The interval 163 to 346 (PAQKSVPQPV…PSRFYPMPRR (184 aa)) is disordered. The segment covering 201 to 233 (LEPEAKTRGEGDGRGCEKAERRPERPEVKKETL) has biased composition (basic and acidic residues). Residues Ser247 and Ser251 each carry the phosphoserine modification. Composition is skewed to polar residues over residues 270-281 (NGWQYSSPSRPG) and 311-322 (RKSSMNQLQQWV). A phosphoserine mark is found at Ser314, Ser459, Ser461, and Ser472. Phosphotyrosine is present on Tyr492. Phosphoserine is present on Ser665. Disordered stretches follow at residues 737–872 (RKNN…PRDI) and 888–984 (ALNK…RPAY). Low complexity-rich tracts occupy residues 761-782 (SSNS…SPFS) and 789-799 (GSPTKPGSSEE). A compositionally biased stretch (pro residues) spans 815-824 (ESPPTVPPLP). At Ser864 the chain carries Phosphoserine. Thr868 bears the Phosphothreonine mark. A Phosphoserine modification is found at Ser901. Thr908 is modified (phosphothreonine). A compositionally biased stretch (polar residues) spans 915 to 926 (RTTNGLTNGLSS). Ser925 carries the post-translational modification Phosphoserine. Residues 940 to 952 (GKVKMSVEEQMDR) show a composition bias toward basic and acidic residues. Positions 953–967 (MRRHQSGSMKEKRRS) are enriched in basic residues. Phosphoserine occurs at positions 973, 979, and 992. The residue at position 1045 (Thr1045) is a Phosphothreonine. Ser1065 is modified (phosphoserine). Disordered stretches follow at residues 1093–1114 (PIGE…QEQE) and 1130–1173 (RGRM…TMRV). Thr1140 carries the post-translational modification Phosphothreonine. The span at 1141-1155 (PSPPTSPASPTPPVN) shows a compositional bias: pro residues. Position 1142 is a phosphoserine (Ser1142). Thr1145 carries the phosphothreonine modification. Phosphoserine is present on residues Ser1146 and Ser1149. Thr1151 carries the post-translational modification Phosphothreonine.

In Mus musculus (Mouse), this protein is Pleckstrin homology domain-containing family A member 6 (Plekha6).